The sequence spans 499 residues: Proline--tRNA ligase (499 aa).

Belongs to the class-II aminoacyl-tRNA synthetase family. ProS type 3 subfamily. Homodimer.

It is found in the cytoplasm. The enzyme catalyses tRNA(Pro) + L-proline + ATP = L-prolyl-tRNA(Pro) + AMP + diphosphate. Functionally, catalyzes the attachment of proline to tRNA(Pro) in a two-step reaction: proline is first activated by ATP to form Pro-AMP and then transferred to the acceptor end of tRNA(Pro). The chain is Proline--tRNA ligase from Bdellovibrio bacteriovorus (strain ATCC 15356 / DSM 50701 / NCIMB 9529 / HD100).